The chain runs to 508 residues: Catalase (508 aa).

Residues His-63 and Asn-136 contribute to the active site. Tyr-346 lines the heme pocket.

It belongs to the catalase family. Homohexamer. Requires heme as cofactor.

Its subcellular location is the cytoplasm. The enzyme catalyses 2 H2O2 = O2 + 2 H2O. In terms of biological role, decomposes hydrogen peroxide into water and oxygen; serves to protect cells from the toxic effects of hydrogen peroxide. The sequence is that of Catalase (katA) from Haemophilus influenzae (strain ATCC 51907 / DSM 11121 / KW20 / Rd).